We begin with the raw amino-acid sequence, 821 residues long: Maternal DNA replication licensing factor mcm6 (821 aa).

The C4-type zinc-finger motif lies at 159-186 (CMDCQSVVKDVEQQFRYTQPTICKNPVC). Residues 347–554 (LYHNLCTSLF…TDYAIARRIV (208 aa)) form the MCM domain. 397 to 404 (GDPSTSKS) contacts ATP. Residues 529–532 (SRFD) carry the Arginine finger motif.

The protein belongs to the MCM family. Component of the mcm2-7 complex (RLF-M). The complex forms a toroidal hexameric ring with the proposed subunit order mcm2-mcm6-mcm4-mcm7-mcm3-mcm5. The heterodimer of mmcm3/mcm5 interacts with mcm4, mmcm6, mcm7 and weakly with mcm2. Component of the CMG helicase complex, composed of the mcm2-7 complex, the GINS complex and cdc45.

It localises to the nucleus. Its subcellular location is the chromosome. It catalyses the reaction ATP + H2O = ADP + phosphate + H(+). Acts as a component of the mcm2-7 complex (mcm complex) which is the putative replicative helicase essential for 'once per cell cycle' DNA replication initiation and elongation in eukaryotic cells. The active ATPase sites in the mcm2-7 ring are formed through the interaction surfaces of two neighboring subunits such that a critical structure of a conserved arginine finger motif is provided in trans relative to the ATP-binding site of the Walker A box of the adjacent subunit. The six ATPase active sites, however, are likely to contribute differentially to the complex helicase activity. The existence of maternal and zygotic forms of mcm3 and mcm6 suggests that specific forms of mcm2-7 complexes may be used during different stages of development. This chain is Maternal DNA replication licensing factor mcm6, found in Xenopus tropicalis (Western clawed frog).